A 131-amino-acid chain; its full sequence is Glycine cleavage system H protein (131 aa).

Residues 24–106 (VYCVGITEHA…YTDGWLFKIK (83 aa)) form the Lipoyl-binding domain. Residue Lys65 is modified to N6-lipoyllysine.

Belongs to the GcvH family. As to quaternary structure, the glycine cleavage system is composed of four proteins: P, T, L and H. (R)-lipoate is required as a cofactor.

Its function is as follows. The glycine cleavage system catalyzes the degradation of glycine. The H protein shuttles the methylamine group of glycine from the P protein to the T protein. In Sodalis glossinidius (strain morsitans), this protein is Glycine cleavage system H protein.